Here is a 92-residue protein sequence, read N- to C-terminus: UPF0250 protein XCC3453 (92 aa).

It belongs to the UPF0250 family.

In Xanthomonas campestris pv. campestris (strain ATCC 33913 / DSM 3586 / NCPPB 528 / LMG 568 / P 25), this protein is UPF0250 protein XCC3453.